The chain runs to 90 residues: uncharacterized protein (90 aa).

The tract at residues 62 to 90 is disordered; that stretch reads RQLKKKQAYKPDPEASFSWSANTSTRGRR. Residues 78-90 are compositionally biased toward polar residues; sequence FSWSANTSTRGRR.

This is an uncharacterized protein from Escherichia coli (strain K12).